Here is a 130-residue protein sequence, read N- to C-terminus: Small ribosomal subunit protein uS9 (130 aa).

It belongs to the universal ribosomal protein uS9 family.

This Caldicellulosiruptor bescii (strain ATCC BAA-1888 / DSM 6725 / KCTC 15123 / Z-1320) (Anaerocellum thermophilum) protein is Small ribosomal subunit protein uS9.